We begin with the raw amino-acid sequence, 52 residues long: UPF0181 protein CGSHiGG_01050 (52 aa).

Belongs to the UPF0181 family.

The sequence is that of UPF0181 protein CGSHiGG_01050 from Haemophilus influenzae (strain PittGG).